The primary structure comprises 326 residues: Homeobox protein Hox-A1 (326 aa).

The short motif at 196–201 is the Antp-type hexapeptide element; sequence TFDWMK. A DNA-binding region (homeobox) is located at residues 221–280; it reads PNTVRTNFTTKQLTELEKEFHFNKYLTRARRVEIAAALQLNETQVKIWFQNRRMKQKKRE. A disordered region spans residues 273-326; sequence RMKQKKREKEGLTSASPATPGSEANTEDTSDKCNSTSSTPSPSSSTSETINTSG. The span at 285–296 shows a compositional bias: polar residues; sequence TSASPATPGSEA. Low complexity predominate over residues 306–326; sequence NSTSSTPSPSSSTSETINTSG.

Belongs to the Antp homeobox family. Labial subfamily.

Its subcellular location is the nucleus. Sequence-specific transcription factor. Part of a developmental regulatory system that provides cells with specific positional identities on the anterior-posterior axis. Acts on the anterior body structures. Seems to act in the maintenance and/or generation of hindbrain segments. In Heterodontus francisci (Horn shark), this protein is Homeobox protein Hox-A1 (HOXA1).